The following is a 36-amino-acid chain: Glucagon-2 (36 aa).

The protein belongs to the glucagon family.

The protein localises to the secreted. Functionally, glucagon plays a key role in glucose metabolism and homeostasis. Regulates blood glucose by increasing gluconeogenesis and decreasing glycolysis. The protein is Glucagon-2 of Huso dauricus (Kaluga sturgeon).